The primary structure comprises 100 residues: NADH-quinone oxidoreductase subunit K 2 (100 aa).

The next 3 helical transmembrane spans lie at 2–22, 29–49, and 61–81; these read LAIE…TIGV, IVIF…FIAF, and FVFF…ALMI.

Belongs to the complex I subunit 4L family. NDH-1 is composed of 14 different subunits. Subunits NuoA, H, J, K, L, M, N constitute the membrane sector of the complex.

It localises to the cell inner membrane. The enzyme catalyses a quinone + NADH + 5 H(+)(in) = a quinol + NAD(+) + 4 H(+)(out). Its function is as follows. NDH-1 shuttles electrons from NADH, via FMN and iron-sulfur (Fe-S) centers, to quinones in the respiratory chain. The immediate electron acceptor for the enzyme in this species is believed to be ubiquinone. Couples the redox reaction to proton translocation (for every two electrons transferred, four hydrogen ions are translocated across the cytoplasmic membrane), and thus conserves the redox energy in a proton gradient. This is NADH-quinone oxidoreductase subunit K 2 from Citrifermentans bemidjiense (strain ATCC BAA-1014 / DSM 16622 / JCM 12645 / Bem) (Geobacter bemidjiensis).